The following is a 1070-amino-acid chain: DNA-directed RNA polymerase subunit beta (1070 aa).

The protein belongs to the RNA polymerase beta chain family. As to quaternary structure, in plastids the minimal PEP RNA polymerase catalytic core is composed of four subunits: alpha, beta, beta', and beta''. When a (nuclear-encoded) sigma factor is associated with the core the holoenzyme is formed, which can initiate transcription.

The protein localises to the plastid. It is found in the chloroplast. The catalysed reaction is RNA(n) + a ribonucleoside 5'-triphosphate = RNA(n+1) + diphosphate. DNA-dependent RNA polymerase catalyzes the transcription of DNA into RNA using the four ribonucleoside triphosphates as substrates. In Gossypium barbadense (Sea Island cotton), this protein is DNA-directed RNA polymerase subunit beta.